Consider the following 418-residue polypeptide: Deubiquitinase and deneddylase Dub1 (418 aa).

The span at methionine 1–lysine 10 shows a compositional bias: polar residues. Residues methionine 1 to valine 23 form a disordered region. A helical membrane pass occupies residues threonine 40–phenylalanine 60. Residues threonine 72–valine 144 form a disordered region. Positions valine 86–proline 141 are enriched in pro residues. Catalysis depends on residues histidine 288, aspartate 305, and cysteine 358.

This sequence belongs to the peptidase C48 family.

The protein resides in the secreted. Its subcellular location is the host cell. It is found in the membrane. Functionally, effector proteins function to alter host cell physiology and promote bacterial survival in host tissues. This protease possesses deubiquitinating and deneddylating activities. The polypeptide is Deubiquitinase and deneddylase Dub1 (cdu1) (Chlamydia trachomatis serovar B (strain Jali20/OT)).